The sequence spans 434 residues: Nuclear distribution protein PAC1 (434 aa).

The 33-residue stretch at 8–40 (QKDDLHKAMLDYLYANNHTAAFNALKESAGITY) folds into the LisH domain. Residues 57-83 (TSVIRLQKKIMELENRNAALQEELSMS) are a coiled coil. WD repeat units follow at residues 106-147 (GHRA…RTLK), 149-187 (HTKP…KNTK), 191-230 (GHDH…QVRT), 233-272 (GHSE…PKSE), 275-334 (GHEN…MIRN), 337-378 (GHDN…RIVE), and 401-434 (KKVN…IWLP).

The protein belongs to the WD repeat LIS1/nudF family. As to quaternary structure, self-associates. Interacts with NDL1 and dynein.

The protein localises to the cytoplasm. It localises to the cytoskeleton. Its subcellular location is the spindle pole. Positively regulates the activity of the minus-end directed microtubule motor protein dynein. May enhance dynein-mediated microtubule sliding by targeting dynein to the microtubule plus end. Required for nuclear migration during vegetative growth as well as development. Required for retrograde early endosome (EE) transport from the hyphal tip. Required for localization of dynein to the mitotic spindle poles. Recruits additional proteins to the dynein complex at SPBs. The chain is Nuclear distribution protein PAC1 from Coprinopsis cinerea (strain Okayama-7 / 130 / ATCC MYA-4618 / FGSC 9003) (Inky cap fungus).